The sequence spans 194 residues: Mitochondrial inner membrane protease ATP23 (194 aa).

Residues 1–20 form a disordered region; sequence MEDAAAPNSGSEFNPGARRG. His96 is a Zn(2+) binding site. Glu97 is an active-site residue. Residue His100 participates in Zn(2+) binding.

The protein belongs to the peptidase M76 family.

The protein localises to the mitochondrion inner membrane. Its function is as follows. Has a dual role in the assembly of mitochondrial ATPase. Acts as a protease that removes the N-terminal 10 residues of mitochondrial ATPase CF(0) subunit 6 (ATP6) at the intermembrane space side. Also involved in the correct assembly of the membrane-embedded ATPase CF(0) particle, probably mediating association of ATP6 with the subunit 9 ring. The polypeptide is Mitochondrial inner membrane protease ATP23 (Arabidopsis thaliana (Mouse-ear cress)).